The following is a 359-amino-acid chain: Membrane-bound lytic murein transglycosylase C (359 aa).

Residues 1 to 16 (MKKYLALALIAPLLIS) form the signal peptide. The N-palmitoyl cysteine moiety is linked to residue Cys17. Residue Cys17 is the site of S-diacylglycerol cysteine attachment.

Belongs to the transglycosylase Slt family.

The protein localises to the cell outer membrane. The catalysed reaction is Exolytic cleavage of the (1-&gt;4)-beta-glycosidic linkage between N-acetylmuramic acid (MurNAc) and N-acetylglucosamine (GlcNAc) residues in peptidoglycan, from either the reducing or the non-reducing ends of the peptidoglycan chains, with concomitant formation of a 1,6-anhydrobond in the MurNAc residue.. Functionally, murein-degrading enzyme. May play a role in recycling of muropeptides during cell elongation and/or cell division. This Escherichia coli (strain SE11) protein is Membrane-bound lytic murein transglycosylase C.